We begin with the raw amino-acid sequence, 307 residues long: Coproporphyrin III ferrochelatase (307 aa).

Fe-coproporphyrin III contacts are provided by residues Tyr12, Arg29, 45-46 (RY), Ser53, and Tyr124. The Fe(2+) site is built by His181 and Glu263.

This sequence belongs to the ferrochelatase family.

The protein resides in the cytoplasm. It carries out the reaction Fe-coproporphyrin III + 2 H(+) = coproporphyrin III + Fe(2+). It participates in porphyrin-containing compound metabolism; protoheme biosynthesis. In terms of biological role, involved in coproporphyrin-dependent heme b biosynthesis. Catalyzes the insertion of ferrous iron into coproporphyrin III to form Fe-coproporphyrin III. This is Coproporphyrin III ferrochelatase from Staphylococcus aureus (strain MRSA252).